The chain runs to 137 residues: MVQLLFKFLIQVGATFVELSRNEIGNKNLLLLIHHAGSLLLSMFGSFSNYPVQKFLDMLDERCLTLIASEFDSYFENLVKDRVGNYVVQRLIWGFKRTGIDLPHSLTSVLVTRSIHLCKHRYGYQVIEAFDRSTRLA.

Pumilio repeat units follow at residues 70 to 105 and 108 to 137; these read EFDS…LPHS and SVLV…TRLA.

The protein localises to the cytoplasm. In terms of biological role, sequence-specific RNA-binding protein that regulates translation and mRNA stability by binding the 3'-UTR of target mRNAs. In Arabidopsis thaliana (Mouse-ear cress), this protein is Putative pumilio homolog 25 (APUM25).